The chain runs to 342 residues: Cyclin-D3-1 (342 aa).

Residues 322-334 (VGSPATNYESSAS) are compositionally biased toward polar residues. Residues 322–342 (VGSPATNYESSASSKRRRICR) form a disordered region.

The protein belongs to the cyclin family. Cyclin D subfamily.

In Oryza sativa subsp. japonica (Rice), this protein is Cyclin-D3-1 (CYCD3-1).